Consider the following 105-residue polypeptide: MAVKRSSKLTQTAMLKQILKRCSSLGKKQCYDEEGLPLDVPKGHFPVYVGEKRTRYIVPISFLTHPEFLILLQQAEEEFGFRHDMGGLTIPCEEVVFLSLTSMIR.

It belongs to the ARG7 family. In terms of tissue distribution, expressed in etiolated hypocotyls, cotyledons, leaves, flowers and siliques.

It is found in the cell membrane. Provide a mechanistic link between auxin and plasma membrane H(+)-ATPases (PM H(+)-ATPases, e.g. AHA1 and AHA2), and triggers PM H(+)-ATPases activity by promoting phosphorylation of their C-terminal autoinhibitory domain as a result of PP2C-D subfamily of type 2C phosphatases inhibition, thus leading to the acidification of the apoplast and the facilitation of solutes and water uptake to drive cell expansion. Triggers plant growth probably by promoting cell elongation. Regulates branch angles and bending. The chain is Protein SMALL AUXIN UP-REGULATED RNA 16 from Arabidopsis thaliana (Mouse-ear cress).